A 227-amino-acid chain; its full sequence is UPF0173 metal-dependent hydrolase BCB4264_A4722 (227 aa).

Belongs to the UPF0173 family.

This Bacillus cereus (strain B4264) protein is UPF0173 metal-dependent hydrolase BCB4264_A4722.